A 497-amino-acid chain; its full sequence is Chlorophyllide reductase 52.5 kDa chain (497 aa).

Helical transmembrane passes span 65-82 (VATV…LSFI), 126-142 (AIVV…GVPL), and 216-233 (MVIG…GPTV).

This sequence belongs to the BchN/ChlN family. In terms of assembly, chlorophyllide reductase is composed of three subunits; BchX, BchY and BchZ. Forms a heterodimer of one BchY and one BchZ subunit.

It is found in the cell membrane. The enzyme catalyses 3-deacetyl-3-vinylbacteriochlorophyllide a + 2 oxidized [2Fe-2S]-[ferredoxin] + ADP + phosphate = chlorophyllide a + 2 reduced [2Fe-2S]-[ferredoxin] + ATP + H2O + H(+). It catalyses the reaction bacteriochlorophyllide a + 2 oxidized [2Fe-2S]-[ferredoxin] + ADP + phosphate = 3-acetyl-3-devinylchlorophyllide a + 2 reduced [2Fe-2S]-[ferredoxin] + ATP + H2O + H(+). The catalysed reaction is 3-deacetyl-3-(1-hydroxyethyl)bacteriochlorophyllide a + 2 oxidized [2Fe-2S]-[ferredoxin] + ADP + phosphate = 3-devinyl-3-(1-hydroxyethyl)chlorophyllide a + 2 reduced [2Fe-2S]-[ferredoxin] + ATP + H2O + H(+). Its pathway is porphyrin-containing compound metabolism; bacteriochlorophyll biosynthesis (light-independent). Its function is as follows. Converts chlorophylls (Chl) into bacteriochlorophylls (BChl) by reducing ring B of the tetrapyrrole. The polypeptide is Chlorophyllide reductase 52.5 kDa chain (bchY) (Rhodobacter capsulatus (strain ATCC BAA-309 / NBRC 16581 / SB1003)).